A 198-amino-acid polypeptide reads, in one-letter code: Proteasome subunit beta 2 (198 aa).

Residues 1 to 4 (MVLA) constitute a propeptide, removed in mature form; by autocatalysis. T5 functions as the Nucleophile in the catalytic mechanism.

It belongs to the peptidase T1B family. The 20S proteasome core is composed of 14 alpha and 14 beta subunits that assemble into four stacked heptameric rings, resulting in a barrel-shaped structure. The two inner rings, each composed of seven catalytic beta subunits, are sandwiched by two outer rings, each composed of seven alpha subunits. The catalytic chamber with the active sites is on the inside of the barrel. Has a gated structure, the ends of the cylinder being occluded by the N-termini of the alpha-subunits. Is capped at one or both ends by the proteasome regulatory ATPase, PAN.

It is found in the cytoplasm. It carries out the reaction Cleavage of peptide bonds with very broad specificity.. With respect to regulation, the formation of the proteasomal ATPase PAN-20S proteasome complex, via the docking of the C-termini of PAN into the intersubunit pockets in the alpha-rings, triggers opening of the gate for substrate entry. Interconversion between the open-gate and close-gate conformations leads to a dynamic regulation of the 20S proteasome proteolysis activity. Functionally, component of the proteasome core, a large protease complex with broad specificity involved in protein degradation. The protein is Proteasome subunit beta 2 of Korarchaeum cryptofilum (strain OPF8).